The sequence spans 439 residues: ATP-dependent RNA helicase RhlB (439 aa).

Residues 9–37 (QKFADLPLHPEVKQALAENGFEFCTPIQA) carry the Q motif motif. Residues 40–219 (LPVLLQSKDI…YDHMNDPVKV (180 aa)) enclose the Helicase ATP-binding domain. 53 to 60 (AQTGTGKT) contributes to the ATP binding site. The DEAD box motif lies at 165-168 (DEAD). The 148-residue stretch at 243–390 (KMRLLLTLIE…VSNYDSSALL (148 aa)) folds into the Helicase C-terminal domain. The tract at residues 398–439 (KIPRKHPAGTRNLRERAGAGRPQGAHRSGGRPPRHDRTRRHS) is disordered. Positions 425-439 (SGGRPPRHDRTRRHS) are enriched in basic residues.

The protein belongs to the DEAD box helicase family. RhlB subfamily. In terms of assembly, component of the RNA degradosome, which is a multiprotein complex involved in RNA processing and mRNA degradation.

Its subcellular location is the cytoplasm. It carries out the reaction ATP + H2O = ADP + phosphate + H(+). DEAD-box RNA helicase involved in RNA degradation. Has RNA-dependent ATPase activity and unwinds double-stranded RNA. This Shewanella putrefaciens (strain CN-32 / ATCC BAA-453) protein is ATP-dependent RNA helicase RhlB.